We begin with the raw amino-acid sequence, 118 residues long: Small ribosomal subunit protein uS13 (118 aa).

The disordered stretch occupies residues 94–118 (SLPLRGQRTKTNARTRKGPRKPIKK).

Belongs to the universal ribosomal protein uS13 family. Part of the 30S ribosomal subunit. Forms a loose heterodimer with protein S19. Forms two bridges to the 50S subunit in the 70S ribosome.

Its function is as follows. Located at the top of the head of the 30S subunit, it contacts several helices of the 16S rRNA. In the 70S ribosome it contacts the 23S rRNA (bridge B1a) and protein L5 of the 50S subunit (bridge B1b), connecting the 2 subunits; these bridges are implicated in subunit movement. Contacts the tRNAs in the A and P-sites. The polypeptide is Small ribosomal subunit protein uS13 (Aliivibrio fischeri (strain ATCC 700601 / ES114) (Vibrio fischeri)).